A 101-amino-acid polypeptide reads, in one-letter code: Small ribosomal subunit protein uS14 (101 aa).

It belongs to the universal ribosomal protein uS14 family. As to quaternary structure, part of the 30S ribosomal subunit. Contacts proteins S3 and S10.

Functionally, binds 16S rRNA, required for the assembly of 30S particles and may also be responsible for determining the conformation of the 16S rRNA at the A site. The chain is Small ribosomal subunit protein uS14 from Nitrosospira multiformis (strain ATCC 25196 / NCIMB 11849 / C 71).